We begin with the raw amino-acid sequence, 342 residues long: Organic solute transporter alpha-like protein 2 (342 aa).

Residues 1 to 50 (MLEISPWETLVKLLTDSLLNCTGTHEDVPHAKTFLRSLTTTYIASLAVAT) lie on the Extracellular side of the membrane. Asn-20 carries an N-linked (GlcNAc...) asparagine glycan. Residues 51–71 (AVTVGTVCLAVLHLIYIHFYI) form a helical membrane-spanning segment. At 72 to 79 (THSSRRLH) the chain is on the cytoplasmic side. Residues 80-100 (IVLLACTAPLVSLLALVAMYM) traverse the membrane as a helical segment. The Extracellular segment spans residues 101 to 109 (PRVWFLSHL). The chain crosses the membrane as a helical span at residues 110–130 (LSFLYFSFALWVIICLLLHIF). The Cytoplasmic portion of the chain corresponds to 131–176 (DGHHALVTKMMQRLQYVEIATPPFCCLFPCLPKVRLEGKKIRWCEL). The chain crosses the membrane as a helical span at residues 177 to 197 (MVMQAPIVRLFATLVSLVIYF). Over 198-208 (EYQDQGLVPLK) the chain is Extracellular. The helical transmembrane segment at 209 to 229 (VLDFITLPSLLAGIYGTHILV) threads the bilayer. At 230 to 243 (TTVSRMDELISYRY) the chain is on the cytoplasmic side. The chain crosses the membrane as a helical span at residues 244 to 264 (VVVFRLLDFFFMVFGLQQPVF). Residues 265–290 (DFLARYGAFGCGTVLPAIETSFYWKN) lie on the Extracellular side of the membrane. The chain crosses the membrane as a helical span at residues 291–311 (FFTVIEAFCVTLISTVLLQPS). The Cytoplasmic segment spans residues 312 to 342 (KSSFFDKHPSCRSMSSARSTITDVDTDESTT).

Belongs to the OST-alpha family.

Its subcellular location is the cell membrane. Probable transporter. The sequence is that of Organic solute transporter alpha-like protein 2 (osta-2) from Caenorhabditis elegans.